A 107-amino-acid polypeptide reads, in one-letter code: CRISPR-associated endoribonuclease Cas2 (107 aa).

Aspartate 6 is a binding site for Mg(2+).

The protein belongs to the CRISPR-associated endoribonuclease Cas2 protein family. As to quaternary structure, homodimer, forms a heterotetramer with a Cas1 homodimer. Mg(2+) serves as cofactor.

Its function is as follows. CRISPR (clustered regularly interspaced short palindromic repeat), is an adaptive immune system that provides protection against mobile genetic elements (viruses, transposable elements and conjugative plasmids). CRISPR clusters contain sequences complementary to antecedent mobile elements and target invading nucleic acids. CRISPR clusters are transcribed and processed into CRISPR RNA (crRNA). Functions as a ssRNA-specific endoribonuclease. Involved in the integration of spacer DNA into the CRISPR cassette. This chain is CRISPR-associated endoribonuclease Cas2, found in Streptococcus mutans serotype c (strain NN2025).